The primary structure comprises 382 residues: MLVVKADYKKYPIPVLEKMRIDEDEFYKKYEACVVVQTCNRIEAYFDTEVNSNVDDILKDFQGFDILKGKNATFHFLKVSCGMDSMILGENQILGQIKTSFQKAREFKKTSRYLDSLFLKAIHVGQRARTETKINEGGVSIGSAAVELAEKNFGLTNRNVLLIGAGEIGTLVAKALVEKHIKAVIVANRTYERAETLAKELKGMAVHFDKLREAVNFSDVIICATSSPHYILEKEDLIDVGNKIIIDIANPRDVDDSVRELENIELYTIDDLRNISDKNLQRRIEEIPTVEKIIEEEYDVLMKQIEKINVEEVLKEFNTYIEEIRVKELEKAIKLSKSKDPEEIMENFSKAFAKRITHDFVSYSLNTSKEDLMNSAWWKNGK.

Residues 38-41, Ser85, 90-92, and Gln96 each bind substrate; these read TCNR and ENQ. The active-site Nucleophile is the Cys39. NADP(+) is bound at residue 164–169; it reads GAGEIG.

The protein belongs to the glutamyl-tRNA reductase family. As to quaternary structure, homodimer.

It catalyses the reaction (S)-4-amino-5-oxopentanoate + tRNA(Glu) + NADP(+) = L-glutamyl-tRNA(Glu) + NADPH + H(+). It functions in the pathway porphyrin-containing compound metabolism; protoporphyrin-IX biosynthesis; 5-aminolevulinate from L-glutamyl-tRNA(Glu): step 1/2. Catalyzes the NADPH-dependent reduction of glutamyl-tRNA(Glu) to glutamate 1-semialdehyde (GSA). This Methanococcus maripaludis (strain C7 / ATCC BAA-1331) protein is Glutamyl-tRNA reductase.